Here is a 199-residue protein sequence, read N- to C-terminus: Acireductone dioxygenase 1 (199 aa).

His-99, His-101, Glu-105, and His-144 together coordinate Fe(2+). Ni(2+) is bound by residues His-99, His-101, Glu-105, and His-144.

It belongs to the acireductone dioxygenase (ARD) family. Requires Fe(2+) as cofactor. Ni(2+) is required as a cofactor.

Its subcellular location is the cytoplasm. The protein localises to the nucleus. It catalyses the reaction 1,2-dihydroxy-5-(methylsulfanyl)pent-1-en-3-one + O2 = 4-methylsulfanyl-2-oxobutanoate + formate + 2 H(+). It carries out the reaction 1,2-dihydroxy-5-(methylsulfanyl)pent-1-en-3-one + O2 = 3-(methylsulfanyl)propanoate + CO + formate + 2 H(+). Its pathway is amino-acid biosynthesis; L-methionine biosynthesis via salvage pathway; L-methionine from S-methyl-5-thio-alpha-D-ribose 1-phosphate: step 5/6. Catalyzes 2 different reactions between oxygen and the acireductone 1,2-dihydroxy-3-keto-5-methylthiopentene (DHK-MTPene) depending upon the metal bound in the active site. Fe-containing acireductone dioxygenase (Fe-ARD) produces formate and 2-keto-4-methylthiobutyrate (KMTB), the alpha-ketoacid precursor of methionine in the methionine recycle pathway. Ni-containing acireductone dioxygenase (Ni-ARD) produces methylthiopropionate, carbon monoxide and formate, and does not lie on the methionine recycle pathway. This chain is Acireductone dioxygenase 1 (ARD1), found in Arabidopsis thaliana (Mouse-ear cress).